Reading from the N-terminus, the 477-residue chain is Glycogen synthase (477 aa).

An ADP-alpha-D-glucose-binding site is contributed by lysine 15.

The protein belongs to the glycosyltransferase 1 family. Bacterial/plant glycogen synthase subfamily.

The enzyme catalyses [(1-&gt;4)-alpha-D-glucosyl](n) + ADP-alpha-D-glucose = [(1-&gt;4)-alpha-D-glucosyl](n+1) + ADP + H(+). Its pathway is glycan biosynthesis; glycogen biosynthesis. Functionally, synthesizes alpha-1,4-glucan chains using ADP-glucose. In Salmonella typhi, this protein is Glycogen synthase.